A 76-amino-acid chain; its full sequence is MARYFRRRKFCRFTAENVTEIDYKDIVTLKNYVTESGKIVPSRITGTRAKYQRQLARAIKRARYLALLPYTDLHNK.

Belongs to the bacterial ribosomal protein bS18 family. In terms of assembly, part of the 30S ribosomal subunit. Forms a tight heterodimer with protein bS6.

Binds as a heterodimer with protein bS6 to the central domain of the 16S rRNA, where it helps stabilize the platform of the 30S subunit. This Aeromonas salmonicida (strain A449) protein is Small ribosomal subunit protein bS18.